We begin with the raw amino-acid sequence, 371 residues long: Epoxyqueuosine reductase (371 aa).

Asp-137 (proton donor) is an active-site residue. In terms of domain architecture, 4Fe-4S ferredoxin-type spans 179-211 (IPLPVDTPVENQCGKCTACISSCPTNAILENGV). Residues Cys-191, Cys-194, Cys-197, Cys-201, Cys-217, Cys-244, Cys-247, and Cys-251 each coordinate [4Fe-4S] cluster.

Belongs to the QueG family. As to quaternary structure, monomer. Requires cob(II)alamin as cofactor. It depends on [4Fe-4S] cluster as a cofactor.

The protein resides in the cytoplasm. It carries out the reaction epoxyqueuosine(34) in tRNA + AH2 = queuosine(34) in tRNA + A + H2O. It participates in tRNA modification; tRNA-queuosine biosynthesis. Catalyzes the conversion of epoxyqueuosine (oQ) to queuosine (Q), which is a hypermodified base found in the wobble positions of tRNA(Asp), tRNA(Asn), tRNA(His) and tRNA(Tyr). The sequence is that of Epoxyqueuosine reductase from Aliivibrio fischeri (strain ATCC 700601 / ES114) (Vibrio fischeri).